A 121-amino-acid chain; its full sequence is Small ribosomal subunit protein uS13 (121 aa).

The segment at G99–K121 is disordered. Positions Q100–K121 are enriched in basic residues.

It belongs to the universal ribosomal protein uS13 family. Part of the 30S ribosomal subunit. Forms a loose heterodimer with protein S19. Forms two bridges to the 50S subunit in the 70S ribosome.

Its function is as follows. Located at the top of the head of the 30S subunit, it contacts several helices of the 16S rRNA. In the 70S ribosome it contacts the 23S rRNA (bridge B1a) and protein L5 of the 50S subunit (bridge B1b), connecting the 2 subunits; these bridges are implicated in subunit movement. Contacts the tRNAs in the A and P-sites. This is Small ribosomal subunit protein uS13 from Synechococcus sp. (strain RCC307).